The sequence spans 172 residues: Protein GrpE (172 aa).

Positions 1 to 23 (MNQDHPECDSEELTQNSPETDPL) are disordered.

This sequence belongs to the GrpE family. Homodimer.

The protein localises to the cytoplasm. In terms of biological role, participates actively in the response to hyperosmotic and heat shock by preventing the aggregation of stress-denatured proteins, in association with DnaK and GrpE. It is the nucleotide exchange factor for DnaK and may function as a thermosensor. Unfolded proteins bind initially to DnaJ; upon interaction with the DnaJ-bound protein, DnaK hydrolyzes its bound ATP, resulting in the formation of a stable complex. GrpE releases ADP from DnaK; ATP binding to DnaK triggers the release of the substrate protein, thus completing the reaction cycle. Several rounds of ATP-dependent interactions between DnaJ, DnaK and GrpE are required for fully efficient folding. This is Protein GrpE from Xylella fastidiosa (strain 9a5c).